The chain runs to 707 residues: Caprin-1 (707 aa).

Low complexity-rich tracts occupy residues 1 to 15 (MPSA…SKSS) and 22 to 43 (GSSG…PATG). The interval 1–48 (MPSATSHSGSGSKSSGPPPPSGSSGSEAAAGAAAPASQHPATGTGAVQ) is disordered. Pro2 is subject to N-acetylproline. Position 10 is a phosphoserine (Ser10). Positions 58-92 (VIDKKLRNLEKKKGKLDDYQERMNKGERLNQDQLD) form a coiled coil. A Phosphoserine modification is found at Ser113. A coiled-coil region spans residues 123-151 (KTIKKTARREQLMREEAEQKRLKTVLELQ). Residue Arg163 is modified to Omega-N-methylarginine. Positions 325–347 (LQQQPQAASPSVPEPHSLTPVAQ) are disordered. Positions 326–335 (QQQPQAASPS) are enriched in low complexity. Residues Ser333 and Ser341 each carry the phosphoserine modification. The tract at residues 358–379 (QDLMAQMQGPYNFIQDSMLDFE) is G3BP1-binding. Disordered regions lie at residues 412–443 (ESRL…YTAS), 523–558 (PVPP…EQTE), and 570–620 (TYHG…RGLM). Polar residues predominate over residues 431-443 (PLVSSTSEGYTAS). The segment covering 535–558 (QQSQYQASYNQSFSSQPHQVEQTE) has biased composition (low complexity). The segment covering 572 to 603 (HGSQDQPHQVPGNHQQPPQQSTGFPRSSQPYY) has biased composition (polar residues). Tyr623 carries the phosphotyrosine modification. Residues Arg624 and Arg631 each carry the omega-N-methylarginine modification. Tyr634 and Tyr637 each carry phosphotyrosine. Arg638 bears the Omega-N-methylarginine mark. The span at 641–655 (FSNTPNSGYTQSQFN) shows a compositional bias: polar residues. A disordered region spans residues 641–707 (FSNTPNSGYT…MPQMNTQQVN (67 aa)). Residues Ser642 and Ser647 are each glycosylated (O-linked (GlcNAc) serine). Residues Tyr649, Tyr660, Tyr663, and Tyr668 each carry the phosphotyrosine modification. Composition is skewed to low complexity over residues 674 to 684 (RGSGQSGPRGA) and 695 to 707 (NRGM…QQVN). Arg696 bears the Asymmetric dimethylarginine; alternate mark. Arg696 bears the Omega-N-methylarginine; alternate mark.

The protein belongs to the caprin family. In terms of assembly, may form homomultimers. Interacts with G3BP1; interaction is direct and promotes stress granule formation. Interacts with G3BP2; interaction is direct and promotes stress granule formation. Interacts with PQBP1. Interacts with DDX3X. Interacts (when phosphorylated by EPHA4) with FMR1; interaction with FMR1 promotes formation of a membraneless compartment. In terms of processing, tyrosine phosphorylation by EPHA4 promotes interaction with FMR1 and liquid-liquid phase separation (LLPS) for the formation of a membraneless compartment that concentrates mRNAs with associated regulatory factors. O-glycosylated (O-GlcNAcylated), in a cell cycle-dependent manner. O-glycosylation by OGT inhibit ability to undergo liquid-liquid phase separation (LLPS). Expressed in hippocampal and neocortical pyramidal neurons, but not in Purkinje cells.

Its subcellular location is the cytoplasm. The protein resides in the cytoplasmic ribonucleoprotein granule. It localises to the cytosol. It is found in the cell projection. The protein localises to the dendrite. Its subcellular location is the lamellipodium. With respect to regulation, ability to mediate liquid-liquid phase separation is regulated by ATP: moderate concentrations of ATP enhance phase separation, whereas high concentrations of ATP lead to inhibition of phase separation. In terms of biological role, mRNA-binding protein that acts as a regulator of mRNAs transport, translation and/or stability, and which is involved in neurogenesis, synaptic plasticity in neurons and cell proliferation and migration in multiple cell types. Plays an essential role in cytoplasmic stress granule formation. Acts as an mRNA regulator by mediating formation of some phase-separated membraneless compartment: undergoes liquid-liquid phase separation upon binding to target mRNAs, leading to assemble mRNAs into cytoplasmic ribonucleoprotein granules that concentrate mRNAs with associated regulatory factors. Undergoes liquid-liquid phase separation following phosphorylation and interaction with FMR1, promoting formation of cytoplasmic ribonucleoprotein granules that concentrate mRNAs with factors that inhibit translation and mediate deadenylation of target mRNAs. In these cytoplasmic ribonucleoprotein granules, CAPRIN1 mediates recruitment of CNOT7 deadenylase, leading to mRNA deadenylation and degradation. Binds directly and selectively to MYC and CCND2 mRNAs. In neuronal cells, directly binds to several mRNAs associated with RNA granules, including BDNF, CAMK2A, CREB1, MAP2, NTRK2 mRNAs, as well as to GRIN1 and KPNB1 mRNAs, but not to rRNAs. The polypeptide is Caprin-1 (Caprin1) (Rattus norvegicus (Rat)).